The sequence spans 466 residues: Ribulose bisphosphate carboxylase large chain (466 aa).

Position 5 is an N6,N6,N6-trimethyllysine (Lys5). Asn114 and Thr164 together coordinate substrate. Lys166 functions as the Proton acceptor in the catalytic mechanism. A substrate-binding site is contributed by Lys168. Lys192, Asp194, and Glu195 together coordinate Mg(2+). At Lys192 the chain carries N6-carboxylysine. Residue His285 is the Proton acceptor of the active site. Arg286, His318, and Ser370 together coordinate substrate.

This sequence belongs to the RuBisCO large chain family. Type I subfamily. As to quaternary structure, heterohexadecamer of 8 large chains and 8 small chains; disulfide-linked. The disulfide link is formed within the large subunit homodimers. Requires Mg(2+) as cofactor. Post-translationally, the disulfide bond which can form in the large chain dimeric partners within the hexadecamer appears to be associated with oxidative stress and protein turnover.

It is found in the plastid. Its subcellular location is the chloroplast. It catalyses the reaction 2 (2R)-3-phosphoglycerate + 2 H(+) = D-ribulose 1,5-bisphosphate + CO2 + H2O. The enzyme catalyses D-ribulose 1,5-bisphosphate + O2 = 2-phosphoglycolate + (2R)-3-phosphoglycerate + 2 H(+). RuBisCO catalyzes two reactions: the carboxylation of D-ribulose 1,5-bisphosphate, the primary event in carbon dioxide fixation, as well as the oxidative fragmentation of the pentose substrate in the photorespiration process. Both reactions occur simultaneously and in competition at the same active site. The protein is Ribulose bisphosphate carboxylase large chain of Drosophyllum lusitanicum (Portuguese sundew).